The chain runs to 133 residues: Small ribosomal subunit protein eS17 (133 aa).

It belongs to the eukaryotic ribosomal protein eS17 family.

The protein is Small ribosomal subunit protein eS17 (RpS17) of Spodoptera frugiperda (Fall armyworm).